A 511-amino-acid chain; its full sequence is ATP synthase subunit alpha, mitochondrial (511 aa).

171–178 (GDRQTGKT) contributes to the ATP binding site.

This sequence belongs to the ATPase alpha/beta chains family. F-type ATPases have 2 components, CF(1) - the catalytic core - and CF(0) - the membrane proton channel. CF(1) has five subunits: alpha(3), beta(3), gamma(1), delta(1), epsilon(1). CF(0) has three main subunits: a, b and c.

It is found in the mitochondrion. Its subcellular location is the mitochondrion inner membrane. In terms of biological role, mitochondrial membrane ATP synthase (F(1)F(0) ATP synthase or Complex V) produces ATP from ADP in the presence of a proton gradient across the membrane which is generated by electron transport complexes of the respiratory chain. F-type ATPases consist of two structural domains, F(1) - containing the extramembraneous catalytic core, and F(0) - containing the membrane proton channel, linked together by a central stalk and a peripheral stalk. During catalysis, ATP synthesis in the catalytic domain of F(1) is coupled via a rotary mechanism of the central stalk subunits to proton translocation. Subunits alpha and beta form the catalytic core in F(1). Rotation of the central stalk against the surrounding alpha(3)beta(3) subunits leads to hydrolysis of ATP in three separate catalytic sites on the beta subunits. Subunit alpha does not bear the catalytic high-affinity ATP-binding sites. The polypeptide is ATP synthase subunit alpha, mitochondrial (ATPA) (Oenothera biennis (German evening primrose)).